We begin with the raw amino-acid sequence, 98 residues long: MKINQPAVAGTLESGDVMIRIAPLDTQDIDLQINSSVEKQFGDAIRTTILDVLARYNVRGVQLNVDDKGALDCILHARLEALLARASGIPALPWEDCQ.

The residue at position 14 (S14) is an O-(phosphoribosyl dephospho-coenzyme A)serine.

The protein belongs to the CitD family. Oligomer with a subunit composition of (alpha,beta,gamma)6.

The protein resides in the cytoplasm. Its function is as follows. Covalent carrier of the coenzyme of citrate lyase. The sequence is that of Citrate lyase acyl carrier protein from Shigella flexneri.